The sequence spans 365 residues: tRNA/tmRNA (uracil-C(5))-methyltransferase (365 aa).

Glutamine 188, tyrosine 216, asparagine 221, glutamate 237, and aspartate 297 together coordinate S-adenosyl-L-methionine. Catalysis depends on cysteine 322, which acts as the Nucleophile. The active-site Proton acceptor is the glutamate 356.

It belongs to the class I-like SAM-binding methyltransferase superfamily. RNA M5U methyltransferase family. TrmA subfamily.

It catalyses the reaction uridine(54) in tRNA + S-adenosyl-L-methionine = 5-methyluridine(54) in tRNA + S-adenosyl-L-homocysteine + H(+). The catalysed reaction is uridine(341) in tmRNA + S-adenosyl-L-methionine = 5-methyluridine(341) in tmRNA + S-adenosyl-L-homocysteine + H(+). Its function is as follows. Dual-specificity methyltransferase that catalyzes the formation of 5-methyluridine at position 54 (m5U54) in all tRNAs, and that of position 341 (m5U341) in tmRNA (transfer-mRNA). The chain is tRNA/tmRNA (uracil-C(5))-methyltransferase from Aggregatibacter aphrophilus (strain NJ8700) (Haemophilus aphrophilus).